A 179-amino-acid polypeptide reads, in one-letter code: Hypoxanthine-guanine phosphoribosyltransferase (179 aa).

Lysine 42 and glycine 43 together coordinate diphosphate. Mg(2+)-binding residues include glutamate 98 and aspartate 99. The active-site Proton acceptor is glutamate 102. Residues lysine 130, 151-152 (FV), and aspartate 158 contribute to the GMP site. Arginine 164 contributes to the diphosphate binding site.

This sequence belongs to the purine/pyrimidine phosphoribosyltransferase family. Mg(2+) is required as a cofactor.

It is found in the cytoplasm. It catalyses the reaction IMP + diphosphate = hypoxanthine + 5-phospho-alpha-D-ribose 1-diphosphate. It carries out the reaction GMP + diphosphate = guanine + 5-phospho-alpha-D-ribose 1-diphosphate. The protein operates within purine metabolism; IMP biosynthesis via salvage pathway; IMP from hypoxanthine: step 1/1. It functions in the pathway purine metabolism; GMP biosynthesis via salvage pathway; GMP from guanine: step 1/1. Purine salvage pathway enzyme that catalyzes the transfer of the ribosyl-5-phosphate group from 5-phospho-alpha-D-ribose 1-diphosphate (PRPP) to the N9 position of the 6-oxopurines hypoxanthine and guanine to form the corresponding ribonucleotides IMP (inosine 5'-monophosphate) and GMP (guanosine 5'-monophosphate), with the release of PPi. The protein is Hypoxanthine-guanine phosphoribosyltransferase (hpt) of Staphylococcus aureus (strain COL).